The sequence spans 325 residues: 5-dehydro-2-deoxygluconokinase (325 aa).

It belongs to the carbohydrate kinase PfkB family.

It carries out the reaction 5-dehydro-2-deoxy-D-gluconate + ATP = 6-phospho-5-dehydro-2-deoxy-D-gluconate + ADP + H(+). Its pathway is polyol metabolism; myo-inositol degradation into acetyl-CoA; acetyl-CoA from myo-inositol: step 5/7. Its function is as follows. Catalyzes the phosphorylation of 5-dehydro-2-deoxy-D-gluconate (2-deoxy-5-keto-D-gluconate or DKG) to 6-phospho-5-dehydro-2-deoxy-D-gluconate (DKGP). This chain is 5-dehydro-2-deoxygluconokinase (iolC), found in Bacillus subtilis (strain 168).